An 835-amino-acid chain; its full sequence is Peptide transporter family 1 (835 aa).

11 helical membrane passes run 86–106 (IFFNGFTVLCYTTPLLGSIVA), 113–133 (FWTIFSVSILYAIGQVVLALA), 150–170 (GLLIIAFGTGGIKPCVSAFGG), 183–203 (LFFSMFYFSINAGSMISTFIS), 222–242 (FGIPAILMIVATLVFMGGSFW), 325–345 (MFLPVPMFWALYDQQGSVWLI), 368–388 (LNAVLILLFIPLFQVIIYPVA), 401–421 (VTGGLLASLAFLITGFVQLQV), 697–717 (ILWQIPQIVVITAAEILFSIT), 738–758 (WLLTTAAGDSIIVVITILNLF), and 765–785 (FFVYAAAMFVVIAIFALLSIF). The tract at residues 814–835 (PRYSIDNKGFHPDEKDTFDMHF) is disordered. The segment covering 821–835 (KGFHPDEKDTFDMHF) has biased composition (basic and acidic residues).

Belongs to the major facilitator superfamily. Proton-dependent oligopeptide transporter (POT/PTR) (TC 2.A.17) family. As to expression, expressed specifically in the intestine.

It localises to the apical cell membrane. Its function is as follows. Low-affinity peptide transporter that is necessary for proton-dependent uptake of di- or tripeptides, and to a minor extent tetrapeptides, in the intestine. Transport is independent of sodium and chloride ions. Controls the uptake of dietary fatty acids, plays a role in fatty acid synthesis and is responsible for dipeptide-induced acidification of the intestine. Regulates cellular pH differences together with the antiporter protein, nhx-2. Amino acid uptake and absorption levels influence the insulin signaling/daf-2 and let-363/TOR pathways, subsequently affecting the stress response and longevity of the organism. It is required for the uptake of the L-enantiomers of various amino acids, including L-glutamate. In response to the availability of amino acid nutrients, may play a role in promoting reproduction and fertility. The protein is Peptide transporter family 1 of Caenorhabditis elegans.